The sequence spans 184 residues: Cytidylate kinase (184 aa).

G8 to T16 serves as a coordination point for ATP.

Belongs to the cytidylate kinase family. Type 2 subfamily.

Its subcellular location is the cytoplasm. It carries out the reaction CMP + ATP = CDP + ADP. The enzyme catalyses dCMP + ATP = dCDP + ADP. The protein is Cytidylate kinase of Pyrobaculum arsenaticum (strain DSM 13514 / JCM 11321 / PZ6).